A 1103-amino-acid polypeptide reads, in one-letter code: Kinesin-like protein KIF1C (1103 aa).

Residues 5–348 (SVKVAVRVRP…LRYADRTKQI (344 aa)) form the Kinesin motor domain. Residue 97 to 104 (GQTGAGKS) coordinates ATP. A Phosphoserine modification is found at S295. 2 coiled-coil regions span residues 359 to 388 (NARL…SALE) and 438 to 479 (EEAM…LAEM). The disordered stretch occupies residues 400 to 438 (ALPAVSSPPAPVSPSSPTTHNGELEPSFSPNTESQIGPE). A Phosphoserine modification is found at S494. The FHA domain maps to 523–590 (TRVGQVDMDI…LKSGNRIVMG (68 aa)). Residues 633-674 (EQQGIDIKLEMEKRLQDLENQYRKEKEEADLLLEQQRLYADS) adopt a coiled-coil conformation. Phosphoserine occurs at positions 674 and 676. Disordered stretches follow at residues 808–828 (GEEE…ARGA), 874–924 (LAQD…WERV), and 950–1103 (QGLQ…GAAV). The segment covering 813 to 822 (GGAGSGGGSE) has biased composition (gly residues). Residues 828–872 (AEVEDLRAHIDKLTGILQEVKLQNSSKDRELQALRDRMLRMERVI) adopt a coiled-coil conformation. Low complexity predominate over residues 893–910 (PEGSEAAEEAAPSDRMPS). The residue at position 915 (S915) is a Phosphoserine. Positions 953–962 (QGSGGRGGGL) are enriched in gly residues. Basic residues predominate over residues 1021–1031 (PSPRRSHHPRR). S1033 carries the post-translational modification Phosphoserine. R1041 carries the omega-N-methylarginine modification. Pro residues predominate over residues 1062-1083 (PQPPQPYPAQRPPGPRYPPYTT). T1083 is subject to Phosphothreonine. The residue at position 1092 (S1092) is a Phosphoserine. Residues 1092 to 1103 (SAPDLKESGAAV) show a composition bias toward basic and acidic residues.

Belongs to the TRAFAC class myosin-kinesin ATPase superfamily. Kinesin family. Unc-104 subfamily. In terms of assembly, monomer. Interacts with BICD2. In terms of processing, phosphorylated on tyrosine residues. Expressed in all tissues examined, with most abundant expression in heart and skeletal muscle.

The protein resides in the cytoplasm. Its subcellular location is the cytoskeleton. Motor required for the retrograde transport of Golgi vesicles to the endoplasmic reticulum. Has a microtubule plus end-directed motility. This chain is Kinesin-like protein KIF1C (KIF1C), found in Homo sapiens (Human).